The following is a 505-amino-acid chain: Zinc metalloproteinase/disintegrin (505 aa).

Residues 1 to 20 (MIQVLLVIICLAAFPYQGTS) form the signal peptide. Residues 21 to 214 (IILESGNVND…PIKKASQSNL (194 aa)) constitute a propeptide that is removed on maturation. A run of 2 repeats spans residues 153 to 179 (KYEDVEKEDEAPKMCGVTQNWESYEPI) and 180 to 206 (KYEDVEKEDEAPKMCGVTQNWESYEPI). The Peptidase M12B domain maps to 220-416 (RYIELVIVAD…QKPQCILNKP (197 aa)). Ca(2+)-binding residues include Glu-223 and Asp-307. His-356 lines the Zn(2+) pocket. Glu-357 is a catalytic residue. Residues His-360 and His-366 each contribute to the Zn(2+) site. Cystine bridges form between Cys-371–Cys-395 and Cys-373–Cys-378. Ca(2+) contacts are provided by Cys-411 and Asn-414. Positions 417-432 (LRTDTVSTPVSGNELL) are excised as a propeptide. The region spanning 424-505 (TPVSGNELLE…AGCPRNPFHA (82 aa)) is the Disintegrin domain. Intrachain disulfides connect Cys-438–Cys-453, Cys-440–Cys-448, Cys-447–Cys-470, Cys-461–Cys-467, Cys-466–Cys-491, and Cys-479–Cys-498. Positions 483–485 (RGD) match the Cell attachment site motif.

Belongs to the venom metalloproteinase (M12B) family. P-II subfamily. P-IIa sub-subfamily. As to quaternary structure, monomer. Zn(2+) serves as cofactor. Expressed by the venom gland.

The protein resides in the secreted. Functionally, impairs hemostasis in the envenomed animal. Its function is as follows. Inhibits platelet aggregation induced by ADP, thrombin, platelet-activating factor and collagen. Acts by inhibiting fibrinogen interaction with platelet receptors GPIIb/GPIIIa (ITGA2B/ITGB3). The chain is Zinc metalloproteinase/disintegrin from Gloydius brevicauda (Korean slamosa snake).